Consider the following 36-residue polypeptide: Photosystem I reaction center subunit VIII (36 aa).

A helical transmembrane segment spans residues 6–28; that stretch reads LPSIFVPXVGLVFPAIAMASXFL.

The protein belongs to the PsaI family.

It is found in the plastid. Its subcellular location is the chloroplast thylakoid membrane. Functionally, may help in the organization of the PsaL subunit. In Acorus gramineus (Dwarf sweet flag), this protein is Photosystem I reaction center subunit VIII.